The sequence spans 264 residues: Proteasome subunit beta type-4 (264 aa).

At M1 the chain carries N-acetylmethionine. The propeptide occupies 1-45 (MEALLESRSGLWAGGPAPGQFYRIPPTPGSSVDPVSALYGSPITR). At Y102 the chain carries Phosphotyrosine.

This sequence belongs to the peptidase T1B family. In terms of assembly, the 26S proteasome consists of a 20S proteasome core and two 19S regulatory subunits. The 20S proteasome core is a barrel-shaped complex made of 28 subunits that are arranged in four stacked rings. The two outer rings are each formed by seven alpha subunits, and the two inner rings are formed by seven beta subunits. The proteolytic activity is exerted by three beta-subunits PSMB5, PSMB6 and PSMB7. Forms a ternary complex with SMAD1 and OAZ1 before PSMB4 is incorporated into the 20S proteasome. Interacts with PRPF19.

It localises to the cytoplasm. The protein resides in the nucleus. Its function is as follows. Non-catalytic component of the 20S core proteasome complex involved in the proteolytic degradation of most intracellular proteins. This complex plays numerous essential roles within the cell by associating with different regulatory particles. Associated with two 19S regulatory particles, forms the 26S proteasome and thus participates in the ATP-dependent degradation of ubiquitinated proteins. The 26S proteasome plays a key role in the maintenance of protein homeostasis by removing misfolded or damaged proteins that could impair cellular functions, and by removing proteins whose functions are no longer required. Associated with the PA200 or PA28, the 20S proteasome mediates ubiquitin-independent protein degradation. This type of proteolysis is required in several pathways including spermatogenesis (20S-PA200 complex) or generation of a subset of MHC class I-presented antigenic peptides (20S-PA28 complex). SMAD1/OAZ1/PSMB4 complex mediates the degradation of the CREBBP/EP300 repressor SNIP1. The sequence is that of Proteasome subunit beta type-4 (PSMB4) from Bos taurus (Bovine).